The chain runs to 570 residues: Methionine--tRNA ligase (570 aa).

A 'HIGH' region motif is present at residues 11-21 (PYVQTVPHLGN). Zn(2+) is bound by residues Cys-143, Cys-146, Cys-156, and Cys-159. A 'KMSKS' region motif is present at residues 333–337 (KFSKS). Residue Lys-336 coordinates ATP.

This sequence belongs to the class-I aminoacyl-tRNA synthetase family. MetG type 1 subfamily. Zn(2+) serves as cofactor.

It is found in the cytoplasm. It catalyses the reaction tRNA(Met) + L-methionine + ATP = L-methionyl-tRNA(Met) + AMP + diphosphate. Its function is as follows. Is required not only for elongation of protein synthesis but also for the initiation of all mRNA translation through initiator tRNA(fMet) aminoacylation. This Pyrobaculum aerophilum (strain ATCC 51768 / DSM 7523 / JCM 9630 / CIP 104966 / NBRC 100827 / IM2) protein is Methionine--tRNA ligase.